Reading from the N-terminus, the 136-residue chain is Antistasin (136 aa).

Positions 1-17 are cleaved as a signal peptide; that stretch reads MIKLAILLLFTVAIVRC. Gln-18 carries the pyrrolidone carboxylic acid modification. Cystine bridges form between Cys-25–Cys-36, Cys-30–Cys-43, Cys-45–Cys-65, Cys-50–Cys-68, Cys-54–Cys-70, Cys-79–Cys-90, Cys-84–Cys-97, Cys-99–Cys-120, Cys-105–Cys-123, and Cys-109–Cys-125. An Antistasin-like 1 domain is found at 45 to 70; it reads CSGVRCRMHCPHGFQRSRYGCEFCKC. The region spanning 100-125 is the Antistasin-like 2 domain; it reads KIDINCRKTCPNGLKRDKLGCEYCEC. Heparin contacts are provided by residues 114 to 117 and 128 to 135; these read KRDK and KRKLIPRL.

Belongs to the protease inhibitor I15 (antistasin) family.

It is found in the secreted. Its function is as follows. This highly disulfide-bonded protein is a potent inhibitor of factor Xa. May have therapeutic utility as an anticoagulant. Also exhibits a strong metastatic activity. The protein is Antistasin of Haementeria officinalis (Mexican leech).